The sequence spans 226 residues: Putative N-acetylmannosamine-6-phosphate 2-epimerase 1 (226 aa).

The protein belongs to the NanE family.

The enzyme catalyses an N-acyl-D-glucosamine 6-phosphate = an N-acyl-D-mannosamine 6-phosphate. It functions in the pathway amino-sugar metabolism; N-acetylneuraminate degradation; D-fructose 6-phosphate from N-acetylneuraminate: step 3/5. Its function is as follows. Converts N-acetylmannosamine-6-phosphate (ManNAc-6-P) to N-acetylglucosamine-6-phosphate (GlcNAc-6-P). In Salmonella typhimurium (strain LT2 / SGSC1412 / ATCC 700720), this protein is Putative N-acetylmannosamine-6-phosphate 2-epimerase 1 (nanE1).